A 119-amino-acid polypeptide reads, in one-letter code: UPF0102 protein Pmen_0910 (119 aa).

This sequence belongs to the UPF0102 family.

This is UPF0102 protein Pmen_0910 from Ectopseudomonas mendocina (strain ymp) (Pseudomonas mendocina).